Consider the following 282-residue polypeptide: 3-methyl-2-oxobutanoate hydroxymethyltransferase (282 aa).

Mg(2+) contacts are provided by D44 and D83. Residues 44–45 (DS), D83, and K113 contribute to the 3-methyl-2-oxobutanoate site. E115 contributes to the Mg(2+) binding site. Residue E182 is the Proton acceptor of the active site.

The protein belongs to the PanB family. Homodecamer; pentamer of dimers. The cofactor is Mg(2+).

Its subcellular location is the cytoplasm. It carries out the reaction 3-methyl-2-oxobutanoate + (6R)-5,10-methylene-5,6,7,8-tetrahydrofolate + H2O = 2-dehydropantoate + (6S)-5,6,7,8-tetrahydrofolate. The protein operates within cofactor biosynthesis; (R)-pantothenate biosynthesis; (R)-pantoate from 3-methyl-2-oxobutanoate: step 1/2. Its function is as follows. Catalyzes the reversible reaction in which hydroxymethyl group from 5,10-methylenetetrahydrofolate is transferred onto alpha-ketoisovalerate to form ketopantoate. The chain is 3-methyl-2-oxobutanoate hydroxymethyltransferase from Dehalococcoides mccartyi (strain ATCC BAA-2266 / KCTC 15142 / 195) (Dehalococcoides ethenogenes (strain 195)).